Reading from the N-terminus, the 430-residue chain is 3-phosphoshikimate 1-carboxyvinyltransferase (430 aa).

3-phosphoshikimate-binding residues include Lys21, Ser22, and Arg26. Lys21 contributes to the phosphoenolpyruvate binding site. Residues Gly92 and Arg120 each contribute to the phosphoenolpyruvate site. 3-phosphoshikimate-binding residues include Ser165, Ser166, Gln167, Ser193, Asp314, and Lys341. Gln167 serves as a coordination point for phosphoenolpyruvate. The active-site Proton acceptor is the Asp314. Arg345, Arg386, and Lys411 together coordinate phosphoenolpyruvate.

It belongs to the EPSP synthase family. Monomer.

The protein resides in the cytoplasm. The catalysed reaction is 3-phosphoshikimate + phosphoenolpyruvate = 5-O-(1-carboxyvinyl)-3-phosphoshikimate + phosphate. It functions in the pathway metabolic intermediate biosynthesis; chorismate biosynthesis. Its function is as follows. Catalyzes the transfer of the enolpyruvyl moiety of phosphoenolpyruvate (PEP) to the 5-hydroxyl of shikimate-3-phosphate (S3P) to produce enolpyruvyl shikimate-3-phosphate and inorganic phosphate. The protein is 3-phosphoshikimate 1-carboxyvinyltransferase of Methanospirillum hungatei JF-1 (strain ATCC 27890 / DSM 864 / NBRC 100397 / JF-1).